The chain runs to 379 residues: Cytochrome b (379 aa).

4 helical membrane passes run Leu34–Met54, Trp78–Val99, Trp114–Leu134, and Phe179–Phe199. Heme b contacts are provided by His84 and His98. The heme b site is built by His183 and His197. Position 202 (His202) interacts with a ubiquinone. The next 4 membrane-spanning stretches (helical) occupy residues Tyr227–Asp247, Leu289–Asn309, Met321–Lys341, and Tyr348–His368.

The protein belongs to the cytochrome b family. As to quaternary structure, the main subunits of complex b-c1 are: cytochrome b, cytochrome c1 and the Rieske protein. Heme b serves as cofactor.

It is found in the mitochondrion inner membrane. Its function is as follows. Component of the ubiquinol-cytochrome c reductase complex (complex III or cytochrome b-c1 complex) that is part of the mitochondrial respiratory chain. The b-c1 complex mediates electron transfer from ubiquinol to cytochrome c. Contributes to the generation of a proton gradient across the mitochondrial membrane that is then used for ATP synthesis. The sequence is that of Cytochrome b (MT-CYB) from Locusta migratoria (Migratory locust).